The primary structure comprises 446 residues: Methionine aminopeptidase 2 (446 aa).

The disordered stretch occupies residues 1–91 (MAAQVTDALK…PPRVLLSNLF (91 aa)). The segment covering 36-48 (EAEDSDDEEEEPV) has biased composition (acidic residues). Positions 59 to 72 (KKKRKRKKKPKKKA) are enriched in basic residues. Substrate is bound at residue histidine 199. A divalent metal cation-binding residues include aspartate 219, aspartate 230, and histidine 299. Histidine 307 contacts substrate. Residues glutamate 332 and glutamate 427 each contribute to the a divalent metal cation site.

Belongs to the peptidase M24A family. Methionine aminopeptidase eukaryotic type 2 subfamily. Co(2+) serves as cofactor. Requires Zn(2+) as cofactor. It depends on Mn(2+) as a cofactor. The cofactor is Fe(2+).

It localises to the cytoplasm. It catalyses the reaction Release of N-terminal amino acids, preferentially methionine, from peptides and arylamides.. Its function is as follows. Cotranslationally removes the N-terminal methionine from nascent proteins. The N-terminal methionine is often cleaved when the second residue in the primary sequence is small and uncharged (Met-Ala-, Cys, Gly, Pro, Ser, Thr, or Val). In Sclerotinia sclerotiorum (strain ATCC 18683 / 1980 / Ss-1) (White mold), this protein is Methionine aminopeptidase 2.